Reading from the N-terminus, the 179-residue chain is Monothiol glutaredoxin-S12, chloroplastic (179 aa).

A chloroplast-targeting transit peptide spans 1–61 (MVAATVNLAN…WPPLRCSSVK (61 aa)). At alanine 62 the chain carries N-acetylalanine. The region spanning 75-176 (EETVKTTVAE…AILAEANGKN (102 aa)) is the Glutaredoxin domain. Cysteine 95 provides a ligand contact to [2Fe-2S] cluster.

The protein belongs to the glutaredoxin family. CPYC subfamily.

Its subcellular location is the plastid. It is found in the chloroplast. In terms of biological role, may only reduce GSH-thiol disulfides, but not protein disulfides. The sequence is that of Monothiol glutaredoxin-S12, chloroplastic (GRXS12) from Arabidopsis thaliana (Mouse-ear cress).